A 129-amino-acid chain; its full sequence is Small ribosomal subunit protein uS12 (129 aa).

A 3-methylthioaspartic acid modification is found at Asp-89. Residues 101–129 (TLDTSGVSDRKQSRSKYGAKQPKAVAAKK) are disordered.

The protein belongs to the universal ribosomal protein uS12 family. Part of the 30S ribosomal subunit. Contacts proteins S8 and S17. May interact with IF1 in the 30S initiation complex.

In terms of biological role, with S4 and S5 plays an important role in translational accuracy. Its function is as follows. Interacts with and stabilizes bases of the 16S rRNA that are involved in tRNA selection in the A site and with the mRNA backbone. Located at the interface of the 30S and 50S subunits, it traverses the body of the 30S subunit contacting proteins on the other side and probably holding the rRNA structure together. The combined cluster of proteins S8, S12 and S17 appears to hold together the shoulder and platform of the 30S subunit. The sequence is that of Small ribosomal subunit protein uS12 from Chlorobium luteolum (strain DSM 273 / BCRC 81028 / 2530) (Pelodictyon luteolum).